The primary structure comprises 137 residues: Small heat shock protein IbpA (137 aa).

Residues 28–137 (SQGNGGYPPY…TLKPRRIEIK (110 aa)) form the sHSP domain.

It belongs to the small heat shock protein (HSP20) family. As to quaternary structure, monomer. Forms homomultimers of about 100-150 subunits at optimal growth temperatures. Conformation changes to monomers at high temperatures or high ionic concentrations.

It is found in the cytoplasm. Its function is as follows. Associates with aggregated proteins, together with IbpB, to stabilize and protect them from irreversible denaturation and extensive proteolysis during heat shock and oxidative stress. Aggregated proteins bound to the IbpAB complex are more efficiently refolded and reactivated by the ATP-dependent chaperone systems ClpB and DnaK/DnaJ/GrpE. Its activity is ATP-independent. In Serratia proteamaculans (strain 568), this protein is Small heat shock protein IbpA.